The sequence spans 1308 residues: Vacuolar transporter chaperone complex subunit 2 (1308 aa).

The region spanning 1 to 284 is the SPX domain; the sequence is MKFSKQLSAQ…QSSAASWYMS (284 aa). At 1-1083 the chain is on the cytoplasmic side; that stretch reads MKFSKQLSAQ…PKTFFANERT (1083 aa). The interval 144–220 is disordered; that stretch reads PQKRGRATEQ…DGGEGEQDDA (77 aa). Residues 197–209 are compositionally biased toward basic and acidic residues; that stretch reads SRGEGDAKRRQGD. Positions 265–272 are important for inositol polyphosphate binding; it reads KITKKYDK. 5 disordered regions span residues 321-384, 611-645, 846-890, 915-946, and 981-1004; these read QQQS…SLAA, EGANATAASHRTGARGAANRGEGSGGGGGNRGSDD, ATEG…RPRV, SAQVSPPTSSGVDQLGNSHRPSVSESRHPSAP, and PLLDDGDRMAGERQSASRGGAPTP. Over residues 332–344 the composition is skewed to basic and acidic residues; sequence DPSKAASVKEDRS. Over residues 632–641 the composition is skewed to gly residues; it reads EGSGGGGGNR. The segment covering 848–857 has biased composition (basic and acidic residues); it reads EGGKGKKADR. Polar residues-rich tracts occupy residues 859 to 871 and 915 to 938; these read SVGQSRLGRNQGD and SAQVSPPTSSGVDQLGNSHRPSVS. A helical transmembrane segment spans residues 1084–1104; sequence LLQWMNTAVLIATISITLMNF. Topologically, residues 1105–1110 are vacuolar; the sequence is GNPVGR. Residues 1111-1131 traverse the membrane as a helical segment; that stretch reads IAGLLMSPVAVFFIGYSFWVY. Residues 1132–1152 lie on the Cytoplasmic side of the membrane; that stretch reads LRRARALERKEPIAYNDKLGP. A helical membrane pass occupies residues 1153 to 1173; that stretch reads SILVVTLMLSLSAVIALNLLY. Residues 1174 to 1308 lie on the Vacuolar side of the membrane; the sequence is HEGEAQLPIT…EGARVTAGAK (135 aa).

This sequence belongs to the VTC2/3 family. As to quaternary structure, the VTC core complex is an integral membrane heterooligomer composed of at least the catalytic subunit vtc4 and the accessory subunits vtc1 and vtc2. vtc1 is a small membrane protein without hydrophilic domain. Vtc2 and vtc4 are related and have 2 hydrophilic domains that face the cytosol, an N-terminal SPX domain and the central core domain. The central core in vtc4 is the catalytic domain.

The protein localises to the vacuole membrane. Accessory subunit of the vacuolar transporter chaperone (VTC) complex. The VTC complex acts as a vacuolar polyphosphate polymerase that catalyzes the synthesis of inorganic polyphosphate (polyP) via transfer of phosphate from ATP to a growing polyP chain, releasing ADP. VTC exposes its catalytic domain vtc4 to the cytosol, where the growing polyP chain winds through a tunnel-shaped pocket, integrating cytoplasmic polymer synthesis with polyP membrane translocation. The VTC complex carries 9 vacuolar transmembrane domains, which are likely to constitute the translocation channel into the organelle lumen. PolyP synthesis is tightly coupled to its transport into the vacuole lumen, in order to avoid otherwise toxic intermediates in the cytosol, and it depends on the proton gradient across the membrane, formed by V-ATPase. The VTC complex also plays a role in vacuolar membrane fusion. This Toxoplasma gondii (strain ATCC 50611 / Me49) protein is Vacuolar transporter chaperone complex subunit 2 (vtc2).